A 306-amino-acid chain; its full sequence is Flavin adenine dinucleotide synthase (306 aa).

Residues Ser59, Ile107, Gly164, 182 to 185 (DSNW), Arg190, and Arg300 each bind FAD.

Belongs to the PAPS reductase family. FAD1 subfamily.

Its subcellular location is the cytoplasm. The catalysed reaction is FMN + ATP + H(+) = FAD + diphosphate. Its pathway is cofactor biosynthesis; FAD biosynthesis; FAD from FMN: step 1/1. In terms of biological role, catalyzes the adenylation of flavin mononucleotide (FMN) to form flavin adenine dinucleotide (FAD) coenzyme. In Saccharomyces cerevisiae (strain ATCC 204508 / S288c) (Baker's yeast), this protein is Flavin adenine dinucleotide synthase.